The chain runs to 316 residues: Retron Ec73 putative ribosyltransferase/DNA-binding protein (316 aa).

Possible ribosyltransferase/DNA-binding component of antiviral defense system retron Ec73, composed of a non-coding RNA (ncRNA) followed by this protein then a reverse transcriptase (RT). Expression of this retron confers protection against bacteriophages SECphi4, SECphi6, SECphi27 and P1. At multiplicity of infection (MOI) of 0.02 cultures grow normally when infected with SECphi4 without collapsing, at MOI 2 cultures enter growth stasis. In Escherichia coli, this protein is Retron Ec73 putative ribosyltransferase/DNA-binding protein.